The sequence spans 604 residues: Nuclear cap-binding protein subunit 3 (604 aa).

A disordered region spans residues 1–36 (MAAVRGLRISVKAEATATTAEPRGPEPEPMEVEEGE). The segment at 116–177 (DTIYICGVDE…MSSFPDQEKP (62 aa)) is RNA recognition motif (RRM) domain. A WLDD motif; essential for 7-methylguanosine-containing mRNA cap binding motif is present at residues 145-148 (WLDD). Disordered stretches follow at residues 168-219 (MSSF…DIEL), 319-383 (KHRH…DSDE), and 457-604 (QNNN…DTES). The span at 173–198 (DQEKPKGGENNEEKTAEKNKKEKQEE) shows a compositional bias: basic and acidic residues. Composition is skewed to acidic residues over residues 199–219 (STDD…DIEL) and 331–349 (EPIE…DEDD). Positions 350 to 370 (RVVVEYRDDLQPFKQSRDRGA) are enriched in basic and acidic residues. Over residues 458–469 (NNNGLRQPNSIV) the composition is skewed to polar residues. Composition is skewed to basic and acidic residues over residues 495-505 (PRREPISDVHS), 539-548 (TQEKTSDKPE), and 569-582 (IKEK…KSRL). Low complexity predominate over residues 595-604 (ESSSGSDTES).

This sequence belongs to the NCBP3 family. In terms of assembly, component of an alternative cap-binding complex (CBC) composed of NCBP1/CBP80 and NCBP3.

Its subcellular location is the nucleus. The protein resides in the cytoplasm. Functionally, associates with NCBP1/CBP80 to form an alternative cap-binding complex (CBC) which plays a key role in mRNA export. NCBP3 serves as adapter protein linking the capped RNAs (m7GpppG-capped RNA) to NCBP1/CBP80. Unlike the conventional CBC with NCBP2 which binds both small nuclear RNA (snRNA) and messenger (mRNA) and is involved in their export from the nucleus, the alternative CBC with NCBP3 does not bind snRNA and associates only with mRNA thereby playing a role in only mRNA export. This chain is Nuclear cap-binding protein subunit 3, found in Gallus gallus (Chicken).